The following is a 140-amino-acid chain: Large ribosomal subunit protein uL15 (140 aa).

Residues 1–32 (MDTKKFRGSRTCGGGTHKNRRGAGNRGGRGKA) are disordered.

Belongs to the universal ribosomal protein uL15 family. In terms of assembly, part of the 50S ribosomal subunit.

Its function is as follows. Binds to the 23S rRNA. This is Large ribosomal subunit protein uL15 from Methanosarcina acetivorans (strain ATCC 35395 / DSM 2834 / JCM 12185 / C2A).